A 387-amino-acid polypeptide reads, in one-letter code: Formate-dependent phosphoribosylglycinamide formyltransferase (387 aa).

N(1)-(5-phospho-beta-D-ribosyl)glycinamide-binding positions include 12 to 13 (EL) and Glu-72. Residues Arg-104, Lys-145, 150-155 (SSGKGQ), 185-188 (EEFI), and Glu-193 each bind ATP. An ATP-grasp domain is found at 109 to 300 (DLAAKDLKLL…EFELHLRAIL (192 aa)). Positions 258 and 270 each coordinate Mg(2+). N(1)-(5-phospho-beta-D-ribosyl)glycinamide is bound by residues Asp-277, Lys-348, and 355 to 356 (RR).

The protein belongs to the PurK/PurT family. In terms of assembly, homodimer.

It carries out the reaction N(1)-(5-phospho-beta-D-ribosyl)glycinamide + formate + ATP = N(2)-formyl-N(1)-(5-phospho-beta-D-ribosyl)glycinamide + ADP + phosphate + H(+). It participates in purine metabolism; IMP biosynthesis via de novo pathway; N(2)-formyl-N(1)-(5-phospho-D-ribosyl)glycinamide from N(1)-(5-phospho-D-ribosyl)glycinamide (formate route): step 1/1. Its function is as follows. Involved in the de novo purine biosynthesis. Catalyzes the transfer of formate to 5-phospho-ribosyl-glycinamide (GAR), producing 5-phospho-ribosyl-N-formylglycinamide (FGAR). Formate is provided by PurU via hydrolysis of 10-formyl-tetrahydrofolate. This chain is Formate-dependent phosphoribosylglycinamide formyltransferase, found in Leptospira interrogans serogroup Icterohaemorrhagiae serovar copenhageni (strain Fiocruz L1-130).